We begin with the raw amino-acid sequence, 106 residues long: Small ribosomal subunit protein uS10 (106 aa).

Belongs to the universal ribosomal protein uS10 family. In terms of assembly, part of the 30S ribosomal subunit.

Its function is as follows. Involved in the binding of tRNA to the ribosomes. The chain is Small ribosomal subunit protein uS10 from Synechococcus sp. (strain RCC307).